Consider the following 275-residue polypeptide: tRNA uridine(34) hydroxylase (275 aa).

The region spanning 121–214 (SQPDVLVIDT…YLEKTYNKNG (94 aa)) is the Rhodanese domain. The active-site Cysteine persulfide intermediate is the C174.

Belongs to the TrhO family.

It carries out the reaction uridine(34) in tRNA + AH2 + O2 = 5-hydroxyuridine(34) in tRNA + A + H2O. Its function is as follows. Catalyzes oxygen-dependent 5-hydroxyuridine (ho5U) modification at position 34 in tRNAs. This Wolbachia pipientis wMel protein is tRNA uridine(34) hydroxylase.